The primary structure comprises 419 residues: L-rhamnose isomerase (419 aa).

Mn(2+) is bound by residues His262, Asp294, and Asp296.

It belongs to the rhamnose isomerase family. As to quaternary structure, homotetramer. The cofactor is Mn(2+).

It is found in the cytoplasm. The enzyme catalyses L-rhamnopyranose = L-rhamnulose. The protein operates within carbohydrate degradation; L-rhamnose degradation; glycerone phosphate from L-rhamnose: step 1/3. Functionally, catalyzes the interconversion of L-rhamnose and L-rhamnulose. The protein is L-rhamnose isomerase of Klebsiella pneumoniae (strain 342).